The following is a 293-amino-acid chain: tRNA pseudouridine synthase B (293 aa).

The Nucleophile role is filled by D40.

This sequence belongs to the pseudouridine synthase TruB family. Type 1 subfamily.

The enzyme catalyses uridine(55) in tRNA = pseudouridine(55) in tRNA. In terms of biological role, responsible for synthesis of pseudouridine from uracil-55 in the psi GC loop of transfer RNAs. The chain is tRNA pseudouridine synthase B from Mycolicibacterium paratuberculosis (strain ATCC BAA-968 / K-10) (Mycobacterium paratuberculosis).